A 234-amino-acid chain; its full sequence is Large ribosomal subunit protein uL1 (234 aa).

It belongs to the universal ribosomal protein uL1 family. As to quaternary structure, part of the 50S ribosomal subunit.

Its function is as follows. Binds directly to 23S rRNA. The L1 stalk is quite mobile in the ribosome, and is involved in E site tRNA release. Functionally, protein L1 is also a translational repressor protein, it controls the translation of the L11 operon by binding to its mRNA. This chain is Large ribosomal subunit protein uL1, found in Psychromonas ingrahamii (strain DSM 17664 / CCUG 51855 / 37).